A 118-amino-acid polypeptide reads, in one-letter code: uncharacterized protein (118 aa).

The next 4 membrane-spanning stretches (helical) occupy residues 12–32 (IISL…FATF), 39–59 (LMPH…SLFI), 63–83 (IIGY…CPTI), and 98–118 (SAHL…VILF).

The protein localises to the cell membrane. This is an uncharacterized protein from Methanocaldococcus jannaschii (strain ATCC 43067 / DSM 2661 / JAL-1 / JCM 10045 / NBRC 100440) (Methanococcus jannaschii).